The primary structure comprises 346 residues: [LysW]-lysine/[LysW]-ornithine hydrolase (346 aa).

Histidine 68 contacts Zn(2+). Residue aspartate 70 is part of the active site. Aspartate 92 contributes to the Zn(2+) binding site. Glutamate 122 serves as the catalytic Proton acceptor. Zn(2+)-binding residues include glutamate 123, glutamate 146, and histidine 317.

It belongs to the peptidase M20A family. LysK subfamily. Zn(2+) serves as cofactor. Co(2+) is required as a cofactor.

It is found in the cytoplasm. It catalyses the reaction [amino-group carrier protein]-C-terminal-gamma-(L-lysyl)-L-glutamate + H2O = [amino-group carrier protein]-C-terminal-L-glutamate + L-lysine. The catalysed reaction is [amino-group carrier protein]-C-terminal-gamma-(L-ornithyl)-L-glutamate + H2O = [amino-group carrier protein]-C-terminal-L-glutamate + L-ornithine. It functions in the pathway amino-acid biosynthesis; L-lysine biosynthesis via AAA pathway; L-lysine from L-alpha-aminoadipate (Thermus route): step 5/5. Its pathway is amino-acid biosynthesis; L-arginine biosynthesis. Catalyzes the release of L-lysine from [LysW]-gamma-L-lysine and the release of L-ornithine from [LysW]-L-ornithine. The chain is [LysW]-lysine/[LysW]-ornithine hydrolase from Saccharolobus islandicus (strain Y.G.57.14 / Yellowstone #1) (Sulfolobus islandicus).